The sequence spans 213 residues: Large ribosomal subunit protein uL3 (213 aa).

The interval 131 to 168 is disordered; it reads GPMSHGSKNHRLPGSTGAGTTPGRVYPGKRMAGRSGND.

This sequence belongs to the universal ribosomal protein uL3 family. Part of the 50S ribosomal subunit. Forms a cluster with proteins L14 and L19.

In terms of biological role, one of the primary rRNA binding proteins, it binds directly near the 3'-end of the 23S rRNA, where it nucleates assembly of the 50S subunit. In Synechococcus elongatus (strain ATCC 33912 / PCC 7942 / FACHB-805) (Anacystis nidulans R2), this protein is Large ribosomal subunit protein uL3.